The sequence spans 184 residues: ATP synthase subunit delta (184 aa).

Belongs to the ATPase delta chain family. F-type ATPases have 2 components, F(1) - the catalytic core - and F(0) - the membrane proton channel. F(1) has five subunits: alpha(3), beta(3), gamma(1), delta(1), epsilon(1). F(0) has three main subunits: a(1), b(2) and c(10-14). The alpha and beta chains form an alternating ring which encloses part of the gamma chain. F(1) is attached to F(0) by a central stalk formed by the gamma and epsilon chains, while a peripheral stalk is formed by the delta and b chains.

It is found in the cell inner membrane. F(1)F(0) ATP synthase produces ATP from ADP in the presence of a proton or sodium gradient. F-type ATPases consist of two structural domains, F(1) containing the extramembraneous catalytic core and F(0) containing the membrane proton channel, linked together by a central stalk and a peripheral stalk. During catalysis, ATP synthesis in the catalytic domain of F(1) is coupled via a rotary mechanism of the central stalk subunits to proton translocation. Its function is as follows. This protein is part of the stalk that links CF(0) to CF(1). It either transmits conformational changes from CF(0) to CF(1) or is implicated in proton conduction. This Rickettsia felis (strain ATCC VR-1525 / URRWXCal2) (Rickettsia azadi) protein is ATP synthase subunit delta.